Reading from the N-terminus, the 299-residue chain is Ribosomal protein L11 methyltransferase (299 aa).

Residues T139, G166, D188, and N231 each coordinate S-adenosyl-L-methionine.

Belongs to the methyltransferase superfamily. PrmA family.

The protein resides in the cytoplasm. It catalyses the reaction L-lysyl-[protein] + 3 S-adenosyl-L-methionine = N(6),N(6),N(6)-trimethyl-L-lysyl-[protein] + 3 S-adenosyl-L-homocysteine + 3 H(+). In terms of biological role, methylates ribosomal protein L11. This chain is Ribosomal protein L11 methyltransferase, found in Thermosynechococcus vestitus (strain NIES-2133 / IAM M-273 / BP-1).